The sequence spans 361 residues: Phospho-N-acetylmuramoyl-pentapeptide-transferase (361 aa).

The next 10 helical transmembrane spans lie at 25–45 (TGGAMVTGALFVFLCGPWIID), 71–91 (TPTMGGLMVLSGLVVGTVLWA), 94–114 (LNPYVWIVLAVTLGFGFVGFY), 133–153 (WRLLIEAVIAAAACYALVRLG), 169–189 (VAINLGWFFVGFGAFIVVGAG), 200–220 (GLAIVPVMIAAASFGLISYLA), 240–260 (LSVLCGALLGAGLGFLWFNAP), 264–284 (IFMGDTGSLALGGMLGSIAVA), 289–309 (IVLAVIGGLFVLEAVSVIVQV), and 338–358 (QIVIRFWIIAVMLALAGLSTL).

This sequence belongs to the glycosyltransferase 4 family. MraY subfamily. It depends on Mg(2+) as a cofactor.

It localises to the cell inner membrane. The enzyme catalyses UDP-N-acetyl-alpha-D-muramoyl-L-alanyl-gamma-D-glutamyl-meso-2,6-diaminopimeloyl-D-alanyl-D-alanine + di-trans,octa-cis-undecaprenyl phosphate = di-trans,octa-cis-undecaprenyl diphospho-N-acetyl-alpha-D-muramoyl-L-alanyl-D-glutamyl-meso-2,6-diaminopimeloyl-D-alanyl-D-alanine + UMP. It functions in the pathway cell wall biogenesis; peptidoglycan biosynthesis. Its function is as follows. Catalyzes the initial step of the lipid cycle reactions in the biosynthesis of the cell wall peptidoglycan: transfers peptidoglycan precursor phospho-MurNAc-pentapeptide from UDP-MurNAc-pentapeptide onto the lipid carrier undecaprenyl phosphate, yielding undecaprenyl-pyrophosphoryl-MurNAc-pentapeptide, known as lipid I. The protein is Phospho-N-acetylmuramoyl-pentapeptide-transferase of Rhodopseudomonas palustris (strain BisB18).